A 313-amino-acid polypeptide reads, in one-letter code: Carbamate kinase 2 (313 aa).

Belongs to the carbamate kinase family.

It localises to the cytoplasm. The enzyme catalyses hydrogencarbonate + NH4(+) + ATP = carbamoyl phosphate + ADP + H2O + H(+). Its pathway is metabolic intermediate metabolism; carbamoyl phosphate degradation; CO(2) and NH(3) from carbamoyl phosphate: step 1/1. This Staphylococcus aureus (strain MRSA252) protein is Carbamate kinase 2 (arcC2).